Here is a 262-residue protein sequence, read N- to C-terminus: MRTSRLKKPIVLLTIALLSSVFFFAFFFLNKSDVSSTSALRNRDSMARTFILWLHGLGDSGPANEPIKTLFRSQEFRNTKWLFPSAPPNPVSCNYGAVMPSWFDIPELPLTAGSPKDESSLLKAVKNVHAIIDKEIAGGINPENVYICGFSQGGALTLASVLLYPKTIGGGAVFSGWIPFNSSITNQFTEDAKKTPILWSHGIDDKTVLFEAGQAALPFLQQAGVTCEFKAYPGLGHSISNEELQYLESWLKQRMQSSSSSS.

Catalysis depends on charge relay system residues S151, D205, and H237.

This sequence belongs to the AB hydrolase superfamily. AB hydrolase 2 family.

Carboxylesterase. This Arabidopsis thaliana (Mouse-ear cress) protein is Probable carboxylesterase SOBER1-like.